The following is a 100-amino-acid chain: Large ribosomal subunit protein uL23 (100 aa).

This sequence belongs to the universal ribosomal protein uL23 family. In terms of assembly, part of the 50S ribosomal subunit. Contacts protein L29, and trigger factor when it is bound to the ribosome.

Its function is as follows. One of the early assembly proteins it binds 23S rRNA. One of the proteins that surrounds the polypeptide exit tunnel on the outside of the ribosome. Forms the main docking site for trigger factor binding to the ribosome. The chain is Large ribosomal subunit protein uL23 from Shewanella frigidimarina (strain NCIMB 400).